A 356-amino-acid chain; its full sequence is Phospho-N-acetylmuramoyl-pentapeptide-transferase (356 aa).

Transmembrane regions (helical) follow at residues 25 to 45 (TVAA…SIIS), 70 to 90 (GTPT…ALLW), 93 to 113 (LFNI…AIGF), 138 to 158 (FLVA…GLAL), 164 to 184 (YFIN…VGLG), 195 to 215 (GLAI…AYLS), 232 to 252 (VGEL…FLWF), 258 to 278 (AIFM…IVSV), 284 to 304 (IVLI…IIQV), and 333 to 353 (QIVV…LSTL).

The protein belongs to the glycosyltransferase 4 family. MraY subfamily. It depends on Mg(2+) as a cofactor.

It is found in the cell inner membrane. It carries out the reaction UDP-N-acetyl-alpha-D-muramoyl-L-alanyl-gamma-D-glutamyl-meso-2,6-diaminopimeloyl-D-alanyl-D-alanine + di-trans,octa-cis-undecaprenyl phosphate = di-trans,octa-cis-undecaprenyl diphospho-N-acetyl-alpha-D-muramoyl-L-alanyl-D-glutamyl-meso-2,6-diaminopimeloyl-D-alanyl-D-alanine + UMP. Its pathway is cell wall biogenesis; peptidoglycan biosynthesis. Functionally, catalyzes the initial step of the lipid cycle reactions in the biosynthesis of the cell wall peptidoglycan: transfers peptidoglycan precursor phospho-MurNAc-pentapeptide from UDP-MurNAc-pentapeptide onto the lipid carrier undecaprenyl phosphate, yielding undecaprenyl-pyrophosphoryl-MurNAc-pentapeptide, known as lipid I. This is Phospho-N-acetylmuramoyl-pentapeptide-transferase from Bartonella bacilliformis (strain ATCC 35685 / KC583 / Herrer 020/F12,63).